The following is a 141-amino-acid chain: Large ribosomal subunit protein uL16 (141 aa).

It belongs to the universal ribosomal protein uL16 family. As to quaternary structure, part of the 50S ribosomal subunit.

Functionally, binds 23S rRNA and is also seen to make contacts with the A and possibly P site tRNAs. The protein is Large ribosomal subunit protein uL16 of Campylobacter lari (strain RM2100 / D67 / ATCC BAA-1060).